The sequence spans 166 residues: Phosphopantetheine adenylyltransferase (166 aa).

Thr10 lines the substrate pocket. ATP-binding positions include 10 to 11 and His18; that span reads TF. Substrate-binding residues include Lys42, Leu74, and Arg88. ATP-binding positions include 89–91, Glu99, and 124–130; these read GLR and NSFISSS.

This sequence belongs to the bacterial CoaD family. Homohexamer. It depends on Mg(2+) as a cofactor.

It is found in the cytoplasm. The catalysed reaction is (R)-4'-phosphopantetheine + ATP + H(+) = 3'-dephospho-CoA + diphosphate. It participates in cofactor biosynthesis; coenzyme A biosynthesis; CoA from (R)-pantothenate: step 4/5. In terms of biological role, reversibly transfers an adenylyl group from ATP to 4'-phosphopantetheine, yielding dephospho-CoA (dPCoA) and pyrophosphate. In Idiomarina loihiensis (strain ATCC BAA-735 / DSM 15497 / L2-TR), this protein is Phosphopantetheine adenylyltransferase.